A 292-amino-acid polypeptide reads, in one-letter code: uncharacterized protein (292 aa).

A helical transmembrane segment spans residues leucine 66 to proline 86.

Its subcellular location is the host membrane. This is an uncharacterized protein from Alcelaphine herpesvirus 1 (strain C500) (AlHV-1).